Here is a 166-residue protein sequence, read N- to C-terminus: Small ribosomal subunit protein uS5 (166 aa).

The region spanning 11 to 74 (LQEKLIAVNR…EKARRNMINV (64 aa)) is the S5 DRBM domain.

Belongs to the universal ribosomal protein uS5 family. In terms of assembly, part of the 30S ribosomal subunit. Contacts proteins S4 and S8.

Its function is as follows. With S4 and S12 plays an important role in translational accuracy. Functionally, located at the back of the 30S subunit body where it stabilizes the conformation of the head with respect to the body. In Actinobacillus succinogenes (strain ATCC 55618 / DSM 22257 / CCUG 43843 / 130Z), this protein is Small ribosomal subunit protein uS5.